The primary structure comprises 121 residues: Non-structural protein 8 (121 aa).

Residues 1 to 15 form the signal peptide; that stretch reads MKLLIVFGLLASVYC. An SARS ORF8 Ig-like domain is found at 19 to 121; sequence ECSIQECCEN…HDVRVVLDFI (103 aa). 3 cysteine pairs are disulfide-bonded: C25–C90, C37–C102, and C61–C83.

The polypeptide is Non-structural protein 8 (Bat coronavirus HKU3 (BtCoV)).